The sequence spans 464 residues: RCC1-like G exchanging factor-like protein (464 aa).

Residues 1 to 37 constitute a mitochondrion transit peptide; the sequence is MALVALVAGARLGRRLSGPGLGRGHWTAAGRSRSRRE. RCC1 repeat units lie at residues 58–124, 128–191, 193–247, 248–300, 302–353, 354–411, and 412–461; these read ADRV…LSSK, VTKV…VLTD, EGVF…FLTD, KGEV…AVSA, GGLF…VLNG, EGHV…ALTN, and KGEL…TLAK.

As to quaternary structure, forms a regulatory protein-RNA complex, consisting of RCC1L, NGRN, RPUSD3, RPUSD4, TRUB2, FASTKD2 and 16S mt-rRNA. Interacts with 16S mt-rRNA; this interaction is direct. Interacts with OPA1; this interaction is direct. In terms of assembly, asociates with the mitochondrial ribosome large subunit (mt-LSU). Asociates with the mitochondrial ribosome small subunit (mt-SSU). As to expression, ubiquitous.

It localises to the mitochondrion membrane. The protein localises to the mitochondrion inner membrane. Functionally, guanine nucleotide exchange factor (GEF) for mitochondrial dynamin-related GTPase OPA1. Activates OPA1, by exchanging bound GDP for free GTP, and drives OPA1 and MFN1-dependent mitochondrial fusion. Plays an essential role in mitochondrial ribosome biogenesis. As a component of a functional protein-RNA module, consisting of RCC1L, NGRN, RPUSD3, RPUSD4, TRUB2, FASTKD2 and 16S mitochondrial ribosomal RNA (16S mt-rRNA), controls 16S mt-rRNA abundance and is required for intra-mitochondrial translation of core subunits of the oxidative phosphorylation system. In terms of biological role, plays an essential role in mitochondrial ribosome biogenesis via its association with GTPases that play a role in the assembly of the large ribosome subunit. Plays an essential role in mitochondrial ribosome biogenesis via its association with GTPases that play a role in the assembly of the small ribosome subunit. The sequence is that of RCC1-like G exchanging factor-like protein from Homo sapiens (Human).